A 436-amino-acid polypeptide reads, in one-letter code: Trigger factor (436 aa).

The PPIase FKBP-type domain occupies 161–246 (DDRVTVDFVG…VNKVEGLSLP (86 aa)).

It belongs to the FKBP-type PPIase family. Tig subfamily.

Its subcellular location is the cytoplasm. It catalyses the reaction [protein]-peptidylproline (omega=180) = [protein]-peptidylproline (omega=0). In terms of biological role, involved in protein export. Acts as a chaperone by maintaining the newly synthesized protein in an open conformation. Functions as a peptidyl-prolyl cis-trans isomerase. The chain is Trigger factor from Pseudoalteromonas atlantica (strain T6c / ATCC BAA-1087).